The sequence spans 255 residues: EEF1A lysine methyltransferase 4 (255 aa).

2 residues coordinate S-adenosyl-L-methionine: W26 and Y30. At Y39 the chain carries Phosphotyrosine. Residues W41, G66, 88–89 (DY), 113–114 (DV), and K130 contribute to the S-adenosyl-L-methionine site. A Required for methyltransferase activity motif is present at residues 129-134 (EKGTLD).

This sequence belongs to the methyltransferase superfamily.

The catalysed reaction is L-lysyl-[protein] + S-adenosyl-L-methionine = N(6)-methyl-L-lysyl-[protein] + S-adenosyl-L-homocysteine + H(+). It carries out the reaction N(6)-methyl-L-lysyl-[protein] + S-adenosyl-L-methionine = N(6),N(6)-dimethyl-L-lysyl-[protein] + S-adenosyl-L-homocysteine + H(+). The enzyme catalyses N(6),N(6)-dimethyl-L-lysyl-[protein] + S-adenosyl-L-methionine = N(6),N(6),N(6)-trimethyl-L-lysyl-[protein] + S-adenosyl-L-homocysteine + H(+). Its function is as follows. Protein-lysine methyltransferase that efficiently catalyzes three successive methylations on 'Lys-36' in eukaryotic translation elongation factor 1 alpha (EEF1A1 or EEF1A2). The chain is EEF1A lysine methyltransferase 4 from Homo sapiens (Human).